Reading from the N-terminus, the 626-residue chain is Hemocyanin AA6 chain (626 aa).

The Cu cation site is built by histidine 170, histidine 174, histidine 201, histidine 321, histidine 325, and histidine 361. A Phosphoserine modification is found at serine 374.

Belongs to the tyrosinase family. Hemocyanin subfamily. Scorpion hemocyanin is a 24-chain polymer with 8 different chains identified, assembled in hexameric substructures. Three disulfide bonds are present. As to expression, hemolymph.

Its subcellular location is the secreted. It localises to the extracellular space. Functionally, hemocyanins are copper-containing oxygen carriers occurring freely dissolved in the hemolymph of many mollusks and arthropods. The chain is Hemocyanin AA6 chain from Androctonus australis (Sahara scorpion).